The primary structure comprises 310 residues: Dicarboxylate carrier UCP2 (310 aa).

Residues 1–10 (MVGFRAGDVP) are Mitochondrial intermembrane-facing. A helical membrane pass occupies residues 11–32 (PTATVKFIGAGTAACIADLFTF). Solcar repeat units lie at residues 11–107 (PTAT…VKQF), 115–204 (AGIG…IKDA), and 213–298 (DDLP…LKRA). Topologically, residues 33-78 (PLDTAKVRLQIQGENKASTNMGRGPVKYRGVFGTISTMVRVEGPRS) are mitochondrial matrix. A helical transmembrane segment spans residues 79–101 (LYSGLVAGLQRQMSFASVRIGLY). At 102–120 (DSVKQFYTKGSDHAGIGSR) the chain is on the mitochondrial intermembrane side. Residues 121–137 (LMAGCTTGAMAVAVAQP) form a helical membrane-spanning segment. Over 138–181 (TDVLKVRFQAQVSAGASKRYHSTMDAYRTIAKEEGFRGLWKGTG) the chain is Mitochondrial matrix. A helical transmembrane segment spans residues 182–198 (PNITRNAIVNCTELVTY). The Mitochondrial intermembrane portion of the chain corresponds to 199 to 215 (DLIKDALLKSSLMTDDL). Residues 216–235 (PCHFTSAFGAGFCTTIIASP) traverse the membrane as a helical segment. The Mitochondrial matrix segment spans residues 236 to 269 (VDVVKTRYMNSAQGQYSSALNCAVAMLTKKGPKA). Residues 270–292 (FFKGFMPSFLRLGSWNVVMFVTY) traverse the membrane as a helical segment. The interval 277 to 299 (SFLRLGSWNVVMFVTYEQLKRAM) is purine nucleotide binding. Topologically, residues 293–310 (EQLKRAMMAARQNWHTPL) are mitochondrial intermembrane.

The protein belongs to the mitochondrial carrier (TC 2.A.29) family. In terms of assembly, homotetramer. Adopts an asymmetrical dimer of dimers functional form.

It is found in the mitochondrion inner membrane. The enzyme catalyses L-aspartate(out) + phosphate(in) + H(+)(in) = L-aspartate(in) + phosphate(out) + H(+)(out). The catalysed reaction is oxaloacetate(out) + phosphate(in) + H(+)(in) = oxaloacetate(in) + phosphate(out) + H(+)(out). It catalyses the reaction (S)-malate(out) + phosphate(in) + H(+)(in) = (S)-malate(in) + phosphate(out) + H(+)(out). It carries out the reaction malonate(out) + phosphate(in) + H(+)(in) = malonate(in) + phosphate(out) + H(+)(out). The enzyme catalyses sulfate(out) + phosphate(in) + H(+)(in) = sulfate(in) + phosphate(out) + H(+)(out). The catalysed reaction is (S)-malate(out) = (S)-malate(in). It catalyses the reaction L-aspartate(out) = L-aspartate(in). It carries out the reaction phosphate(in) = phosphate(out). The enzyme catalyses chloride(in) = chloride(out). The catalysed reaction is H(+)(in) = H(+)(out). It catalyses the reaction a long-chain fatty acid(out) = a long-chain fatty acid(in). Functionally, UCP are mitochondrial transporter proteins that create proton leaks across the inner mitochondrial membrane, thus uncoupling oxidative phosphorylation from ATP synthesis. As a result, energy is dissipated in the form of heat. Its function is as follows. Antiporter that exports dicarboxylate intermediates of the Krebs cycle in exchange for phosphate plus a proton across the inner membrane of mitochondria, a process driven by mitochondrial motive force with an overall impact on glycolysis, glutaminolysis and glutathione-dependent redox balance. Continuous export of oxaloacetate and related four-carbon dicarboxylates from mitochondrial matrix into the cytosol negatively regulates the oxidation of acetyl-CoA substrates via the Krebs cycle, lowering the ATP/ADP ratio and reactive oxygen species (ROS) production. May mediate inducible proton entry into the mitochondrial matrix affecting ATP turnover as a protection mechanism against oxidative stress. The proton currents are most likely associated with fatty acid flipping across the inner membrane of mitochondria in a metabolic process regulated by free fatty acids and purine nucleotides. This chain is Dicarboxylate carrier UCP2 (ucp2), found in Danio rerio (Zebrafish).